The primary structure comprises 442 residues: Urokinase-type plasminogen activator (442 aa).

Residues 1 to 20 form the signal peptide; the sequence is MRVLRACLSLCVLVVSDSKG. Residues 29 to 65 form the EGF-like domain; the sequence is GASNCGCLNGGKCVSYKYFSNIQRCSCPKKFQGEHCE. 12 disulfide bridges follow: Cys33-Cys41, Cys35-Cys53, Cys55-Cys64, Cys72-Cys153, Cys93-Cys135, Cys124-Cys148, Cys179-Cys310, Cys220-Cys236, Cys228-Cys299, Cys324-Cys393, Cys356-Cys372, and Cys383-Cys411. A binds urokinase plasminogen activator surface receptor region spans residues 36–59; that stretch reads LNGGKCVSYKYFSNIQRCSCPKKF. In terms of domain architecture, Kringle spans 72–153; it reads CFEGNGHSYR…LVQECMVPNC (82 aa). N-linked (GlcNAc...) asparagine glycosylation is present at Asn152. The interval 154-189 is connecting peptide; the sequence is SGGESHRPAYDGKNPFSTPEKVEFQCGQKALRPRFK. A Peptidase S1 domain is found at 190–435; it reads IVGGKSTTIE…FLTWIHTHVG (246 aa). Active-site charge relay system residues include His235 and Asp286. Residue Ser387 is the Charge relay system of the active site.

Belongs to the peptidase S1 family. As to quaternary structure, found in high and low molecular mass forms. Each consists of two chains, A and B. The high molecular mass form contains a long chain A which is cleaved to yield a short chain A. Forms heterodimer with SERPINA5. Binds LRP1B; binding is followed by internalization and degradation. Interacts with MRC2. Interacts with PLAUR. In complex with SERPINE1, interacts with PLAUR/uPAR. Interacts with SORL1 and LRP1, either alone or in complex with SERPINE1; these interactions are abolished in the presence of LRPAP1/RAP. The ternary complex composed of PLAUR-PLAU-PAI1 also interacts with SORLA. Produced as an inactive single-chain protein (pro-uPA or sc-uPA), is processed into the active disulfide-linked two-chain form of PLAU/uPA by a proteolytic event mediated, at least, by TMPRSS4.

Its subcellular location is the secreted. It catalyses the reaction Specific cleavage of Arg-|-Val bond in plasminogen to form plasmin.. Inhibited by SERPINA5. Inhibited by SERPINE1. In terms of biological role, specifically cleaves the zymogen plasminogen to form the active enzyme plasmin. The protein is Urokinase-type plasminogen activator (PLAU) of Sus scrofa (Pig).